Consider the following 642-residue polypeptide: Eukaryotic translation initiation factor 2A (642 aa).

4 WD repeats span residues 69–115, 186–224, 289–331, and 374–419; these read MKLS…KKDC, TYLI…ITKK, LTTG…HSLP, and FDAT…VFVK. A disordered region spans residues 485–593; the sequence is ISQHPSREAS…KETSPEEKKI (109 aa). Low complexity-rich tracts occupy residues 493 to 507 and 563 to 583; these read ASSN…AGGA and TSPD…PTNN. A phosphoserine mark is found at S564, S567, and S572.

The protein belongs to the WD repeat EIF2A family. Post-translationally, ubiquitinated, probably leading to its degradation. May explain why it has a short half-life of 17 minutes.

Functionally, functions in the early steps of protein synthesis of a small number of specific mRNAs. Acts by directing the binding of methionyl-tRNAi to 40S ribosomal subunits. In contrast to the eIF-2 complex, it binds methionyl-tRNAi to 40S subunits in a codon-dependent manner, whereas the eIF-2 complex binds methionyl-tRNAi to 40S subunits in a GTP-dependent manner. Specifically associates with both 40S subunits and 80S ribosomes. The protein is Eukaryotic translation initiation factor 2A of Saccharomyces cerevisiae (strain ATCC 204508 / S288c) (Baker's yeast).